A 377-amino-acid polypeptide reads, in one-letter code: Anhydro-N-acetylmuramic acid kinase (377 aa).

An ATP-binding site is contributed by glycine 19–aspartate 26.

Belongs to the anhydro-N-acetylmuramic acid kinase family.

The enzyme catalyses 1,6-anhydro-N-acetyl-beta-muramate + ATP + H2O = N-acetyl-D-muramate 6-phosphate + ADP + H(+). Its pathway is amino-sugar metabolism; 1,6-anhydro-N-acetylmuramate degradation. It participates in cell wall biogenesis; peptidoglycan recycling. Catalyzes the specific phosphorylation of 1,6-anhydro-N-acetylmuramic acid (anhMurNAc) with the simultaneous cleavage of the 1,6-anhydro ring, generating MurNAc-6-P. Is required for the utilization of anhMurNAc either imported from the medium or derived from its own cell wall murein, and thus plays a role in cell wall recycling. This chain is Anhydro-N-acetylmuramic acid kinase, found in Roseobacter denitrificans (strain ATCC 33942 / OCh 114) (Erythrobacter sp. (strain OCh 114)).